The following is a 257-amino-acid chain: tRNA (guanine-N(1)-)-methyltransferase (257 aa).

S-adenosyl-L-methionine contacts are provided by residues Gly-112 and 136–141; that span reads LGDYVL.

The protein belongs to the RNA methyltransferase TrmD family. Homodimer.

Its subcellular location is the cytoplasm. The catalysed reaction is guanosine(37) in tRNA + S-adenosyl-L-methionine = N(1)-methylguanosine(37) in tRNA + S-adenosyl-L-homocysteine + H(+). In terms of biological role, specifically methylates guanosine-37 in various tRNAs. The protein is tRNA (guanine-N(1)-)-methyltransferase of Salinispora tropica (strain ATCC BAA-916 / DSM 44818 / JCM 13857 / NBRC 105044 / CNB-440).